Reading from the N-terminus, the 278-residue chain is Glycerophosphodiester phosphodiesterase GpdQ (278 aa).

D8, H10, D50, N80, H156, H195, and H197 together coordinate Fe cation.

It belongs to the cyclic nucleotide phosphodiesterase class-III family. Fe(2+) serves as cofactor.

The catalysed reaction is a sn-glycero-3-phosphodiester + H2O = an alcohol + sn-glycerol 3-phosphate + H(+). The enzyme catalyses sn-glycero-3-phosphoethanolamine + H2O = ethanolamine + sn-glycerol 3-phosphate + H(+). Functionally, catalyzes the hydrolysis of the 3'-5' phosphodiester bond of glycerophosphodiesters such as glycerophosphorylethanolamine (GPE), a typical phospholipid metabolite. This chain is Glycerophosphodiester phosphodiesterase GpdQ, found in Enterobacter lignolyticus (strain SCF1).